Here is a 337-residue protein sequence, read N- to C-terminus: Anthranilate phosphoribosyltransferase (337 aa).

5-phospho-alpha-D-ribose 1-diphosphate is bound by residues Gly-81, Gly-84–Asp-85, Ser-89, Asn-91–Thr-94, Lys-109–Ser-117, and Ala-121. Gly-81 lines the anthranilate pocket. Ser-93 is a Mg(2+) binding site. Asn-112 is an anthranilate binding site. Residue Arg-167 participates in anthranilate binding. Mg(2+)-binding residues include Asp-226 and Glu-227.

This sequence belongs to the anthranilate phosphoribosyltransferase family. Homodimer. Requires Mg(2+) as cofactor.

The enzyme catalyses N-(5-phospho-beta-D-ribosyl)anthranilate + diphosphate = 5-phospho-alpha-D-ribose 1-diphosphate + anthranilate. It participates in amino-acid biosynthesis; L-tryptophan biosynthesis; L-tryptophan from chorismate: step 2/5. Catalyzes the transfer of the phosphoribosyl group of 5-phosphorylribose-1-pyrophosphate (PRPP) to anthranilate to yield N-(5'-phosphoribosyl)-anthranilate (PRA). This is Anthranilate phosphoribosyltransferase from Nitrobacter hamburgensis (strain DSM 10229 / NCIMB 13809 / X14).